Here is a 158-residue protein sequence, read N- to C-terminus: Transcription elongation factor GreA (158 aa).

Residues 4 to 70 adopt a coiled-coil conformation; the sequence is QKQYPMTQEG…IEQDIQRIEH (67 aa).

This sequence belongs to the GreA/GreB family.

Functionally, necessary for efficient RNA polymerase transcription elongation past template-encoded arresting sites. The arresting sites in DNA have the property of trapping a certain fraction of elongating RNA polymerases that pass through, resulting in locked ternary complexes. Cleavage of the nascent transcript by cleavage factors such as GreA or GreB allows the resumption of elongation from the new 3'terminus. GreA releases sequences of 2 to 3 nucleotides. This is Transcription elongation factor GreA from Staphylococcus aureus (strain Mu3 / ATCC 700698).